A 241-amino-acid polypeptide reads, in one-letter code: MNSFTSALRPGPLGCSLALLLVVATAFPTSAPVREDSNTKASPDKTLTPPGRTIESIRSILETIKELRKEMCDHDVNCMNRKEALAEVNLHLPRLIEEDGCFPPAVNNETCLLRITSGLMEFRMYLEHLQAKFRSDEENTRVSMVLKNIQHLIKTLRPKVKNLNEEATLKPAVAVSLMENLQQKNQWLKTTTIHFILRGLTNFLEFTLRAVDLMECGCPCLRNFMGSASHGQNTPSCPLDT.

Positions 1-26 (MNSFTSALRPGPLGCSLALLLVVATA) are cleaved as a signal peptide. The interval 32–51 (PVREDSNTKASPDKTLTPPG) is disordered. 2 disulfides stabilise this stretch: cysteine 72–cysteine 78 and cysteine 101–cysteine 111. N-linked (GlcNAc...) asparagine glycosylation is present at asparagine 108.

Belongs to the IL-6 superfamily. In terms of assembly, component of a hexamer of two molecules each of IL6, IL6R and IL6ST; first binds to IL6R to associate with the signaling subunit IL6ST. Interacts with IL6R (via the N-terminal ectodomain); this interaction may be affected by IL6R-binding with SORL1, hence decreasing IL6 cis signaling. Interacts with SORL1 (via the N-terminal ectodomain); this interaction leads to IL6 internalization and lysosomal degradation. May form a trimeric complex with the soluble SORL1 ectodomain and soluble IL6R receptor; this interaction might stabilize circulating IL6, hence promoting IL6 trans signaling.

It localises to the secreted. In terms of biological role, cytokine with a wide variety of biological functions in immunity, tissue regeneration, and metabolism. Binds to IL6R, then the complex associates to the signaling subunit IL6ST/gp130 to trigger the intracellular IL6-signaling pathway. The interaction with the membrane-bound IL6R and IL6ST stimulates 'classic signaling', whereas the binding of IL6 and soluble IL6R to IL6ST stimulates 'trans-signaling'. Alternatively, 'cluster signaling' occurs when membrane-bound IL6:IL6R complexes on transmitter cells activate IL6ST receptors on neighboring receiver cells. Functionally, IL6 is a potent inducer of the acute phase response. Rapid production of IL6 contributes to host defense during infection and tissue injury, but excessive IL6 synthesis is involved in disease pathology. In the innate immune response, is synthesized by myeloid cells, such as macrophages and dendritic cells, upon recognition of pathogens through toll-like receptors (TLRs) at the site of infection or tissue injury. In the adaptive immune response, is required for the differentiation of B cells into immunoglobulin-secreting cells. Plays a major role in the differentiation of CD4(+) T cell subsets. Essential factor for the development of T follicular helper (Tfh) cells that are required for the induction of germinal-center formation. Required to drive naive CD4(+) T cells to the Th17 lineage. Also required for proliferation of myeloma cells and the survival of plasmablast cells. Its function is as follows. Acts as an essential factor in bone homeostasis and on vessels directly or indirectly by induction of VEGF, resulting in increased angiogenesis activity and vascular permeability. Induces, through 'trans-signaling' and synergistically with IL1B and TNF, the production of VEGF. Involved in metabolic controls, is discharged into the bloodstream after muscle contraction increasing lipolysis and improving insulin resistance. 'Trans-signaling' in central nervous system also regulates energy and glucose homeostasis. Mediates, through GLP-1, crosstalk between insulin-sensitive tissues, intestinal L cells and pancreatic islets to adapt to changes in insulin demand. Also acts as a myokine. Plays a protective role during liver injury, being required for maintenance of tissue regeneration. Also has a pivotal role in iron metabolism by regulating HAMP/hepcidin expression upon inflammation or bacterial infection. Through activation of IL6ST-YAP-NOTCH pathway, induces inflammation-induced epithelial regeneration. This Oryctolagus cuniculus (Rabbit) protein is Interleukin-6 (IL6).